The chain runs to 111 residues: Probable monothiol glutaredoxin 2 (111 aa).

In terms of domain architecture, Glutaredoxin spans 7 to 109 (LKFIQNAIKK…KMLKDETKLI (103 aa)). Lysine 24 contributes to the glutathione binding site. Cysteine 32 is a binding site for [2Fe-2S] cluster. Residues arginine 61, phenylalanine 73, and 86–87 (CD) each bind glutathione.

It belongs to the glutaredoxin family. Monothiol subfamily.

The chain is Probable monothiol glutaredoxin 2 (grxC2) from Rickettsia typhi (strain ATCC VR-144 / Wilmington).